The sequence spans 92 residues: Small ribosomal subunit protein uS19 (92 aa).

It belongs to the universal ribosomal protein uS19 family.

Functionally, protein S19 forms a complex with S13 that binds strongly to the 16S ribosomal RNA. The chain is Small ribosomal subunit protein uS19 from Exiguobacterium sibiricum (strain DSM 17290 / CCUG 55495 / CIP 109462 / JCM 13490 / 255-15).